A 191-amino-acid chain; its full sequence is Thiol:disulfide interchange protein TxlA (191 aa).

A helical membrane pass occupies residues 14–30 (ILVIAAALVLTILVVLG). The 122-residue stretch at 27 to 148 (VVLGSRQPSA…LAANLDALVE (122 aa)) folds into the Thioredoxin domain. C69 and C72 are disulfide-bonded. The span at 165 to 185 (SADLQPSRSSQTDPRSHSGQV) shows a compositional bias: polar residues. The interval 165 to 191 (SADLQPSRSSQTDPRSHSGQVQDGVLD) is disordered.

It belongs to the thioredoxin family.

It localises to the cell membrane. Required for disulfide bond formation in some proteins. Acts by transferring its disulfide bond to other proteins and is reduced in the process. This Synechococcus elongatus (strain ATCC 33912 / PCC 7942 / FACHB-805) (Anacystis nidulans R2) protein is Thiol:disulfide interchange protein TxlA (txlA).